The following is a 274-amino-acid chain: Diaminopimelate epimerase (274 aa).

Substrate contacts are provided by asparagine 11, glutamine 44, and asparagine 64. The Proton donor role is filled by cysteine 73. Substrate contacts are provided by residues 74–75 (GN), asparagine 157, asparagine 190, and 208–209 (ER). The Proton acceptor role is filled by cysteine 217. Residue 218 to 219 (GS) coordinates substrate.

The protein belongs to the diaminopimelate epimerase family. As to quaternary structure, homodimer.

Its subcellular location is the cytoplasm. The catalysed reaction is (2S,6S)-2,6-diaminopimelate = meso-2,6-diaminopimelate. It functions in the pathway amino-acid biosynthesis; L-lysine biosynthesis via DAP pathway; DL-2,6-diaminopimelate from LL-2,6-diaminopimelate: step 1/1. Catalyzes the stereoinversion of LL-2,6-diaminopimelate (L,L-DAP) to meso-diaminopimelate (meso-DAP), a precursor of L-lysine and an essential component of the bacterial peptidoglycan. This chain is Diaminopimelate epimerase, found in Haemophilus influenzae (strain PittGG).